The sequence spans 719 residues: Photosystem I P700 chlorophyll a apoprotein A1 (719 aa).

8 helical membrane passes run 61-84, 147-170, 186-210, 282-300, 337-360, 376-402, 424-446, and 522-540; these read VFSAHFGQLAIIFIWLSGMYFHGA, LYCTATGALIFAALMLFAGWFHYH, LNHHLAGLLGLGSLGWAGHQVHVSL, TAHHHLAIAILFLIAGHMY, WHAQLALNLAMLGSLTIVVAHHMY, LSLFTHHMWIGGFLIVGAAAHAAIFMV, AIVSHLNWACIFLGFHSFGLYIH, and FLVHHIHAFTIHVTVLILL. Residues Cys-564 and Cys-573 each contribute to the [4Fe-4S] cluster site. A run of 2 helical transmembrane segments spans residues 580–601 and 655–677; these read HVFLGLFWMYNAISVVIFHFSW and LSAYGLFFLGAHFVWAFSLMFLF. His-666 is a binding site for chlorophyll a'. Positions 674 and 682 each coordinate chlorophyll a. Trp-683 is a binding site for phylloquinone. The chain crosses the membrane as a helical span at residues 715 to 719; that stretch reads AVGVA.

It belongs to the PsaA/PsaB family. In terms of assembly, the PsaA/B heterodimer binds the P700 chlorophyll special pair and subsequent electron acceptors. PSI consists of a core antenna complex that captures photons, and an electron transfer chain that converts photonic excitation into a charge separation. The eukaryotic PSI reaction center is composed of at least 11 subunits. P700 is a chlorophyll a/chlorophyll a' dimer, A0 is one or more chlorophyll a, A1 is one or both phylloquinones and FX is a shared 4Fe-4S iron-sulfur center. is required as a cofactor.

It is found in the plastid. The protein resides in the chloroplast thylakoid membrane. The catalysed reaction is reduced [plastocyanin] + hnu + oxidized [2Fe-2S]-[ferredoxin] = oxidized [plastocyanin] + reduced [2Fe-2S]-[ferredoxin]. Functionally, psaA and PsaB bind P700, the primary electron donor of photosystem I (PSI), as well as the electron acceptors A0, A1 and FX. PSI is a plastocyanin-ferredoxin oxidoreductase, converting photonic excitation into a charge separation, which transfers an electron from the donor P700 chlorophyll pair to the spectroscopically characterized acceptors A0, A1, FX, FA and FB in turn. Oxidized P700 is reduced on the lumenal side of the thylakoid membrane by plastocyanin. The polypeptide is Photosystem I P700 chlorophyll a apoprotein A1 (Torreya californica (California nutmeg)).